We begin with the raw amino-acid sequence, 101 residues long: Small ribosomal subunit protein uS14 (101 aa).

The protein belongs to the universal ribosomal protein uS14 family. As to quaternary structure, part of the 30S ribosomal subunit. Contacts proteins S3 and S10.

In terms of biological role, binds 16S rRNA, required for the assembly of 30S particles and may also be responsible for determining the conformation of the 16S rRNA at the A site. The protein is Small ribosomal subunit protein uS14 of Actinobacillus pleuropneumoniae serotype 3 (strain JL03).